We begin with the raw amino-acid sequence, 129 residues long: D-ribose pyranase (129 aa).

Catalysis depends on H20, which acts as the Proton donor. Substrate contacts are provided by residues D28, H96, and 118 to 120; that span reads YAN.

It belongs to the RbsD / FucU family. RbsD subfamily. As to quaternary structure, homodecamer.

Its subcellular location is the cytoplasm. The catalysed reaction is beta-D-ribopyranose = beta-D-ribofuranose. The protein operates within carbohydrate metabolism; D-ribose degradation; D-ribose 5-phosphate from beta-D-ribopyranose: step 1/2. Catalyzes the interconversion of beta-pyran and beta-furan forms of D-ribose. This chain is D-ribose pyranase, found in Staphylococcus saprophyticus subsp. saprophyticus (strain ATCC 15305 / DSM 20229 / NCIMB 8711 / NCTC 7292 / S-41).